The following is a 389-amino-acid chain: Phospho-N-acetylmuramoyl-pentapeptide-transferase (389 aa).

10 consecutive transmembrane segments (helical) span residues arginine 25–isoleucine 45, threonine 73–leucine 93, phenylalanine 97–tyrosine 117, phenylalanine 135–alanine 155, isoleucine 190–alanine 210, glycine 222–methionine 242, alanine 259–phenylalanine 279, phenylalanine 287–valine 307, isoleucine 311–valine 331, and glutamine 366–leucine 386.

The protein belongs to the glycosyltransferase 4 family. MraY subfamily. The cofactor is Mg(2+).

The protein localises to the cell inner membrane. It catalyses the reaction UDP-N-acetyl-alpha-D-muramoyl-L-alanyl-gamma-D-glutamyl-meso-2,6-diaminopimeloyl-D-alanyl-D-alanine + di-trans,octa-cis-undecaprenyl phosphate = di-trans,octa-cis-undecaprenyl diphospho-N-acetyl-alpha-D-muramoyl-L-alanyl-D-glutamyl-meso-2,6-diaminopimeloyl-D-alanyl-D-alanine + UMP. It participates in cell wall biogenesis; peptidoglycan biosynthesis. Catalyzes the initial step of the lipid cycle reactions in the biosynthesis of the cell wall peptidoglycan: transfers peptidoglycan precursor phospho-MurNAc-pentapeptide from UDP-MurNAc-pentapeptide onto the lipid carrier undecaprenyl phosphate, yielding undecaprenyl-pyrophosphoryl-MurNAc-pentapeptide, known as lipid I. The sequence is that of Phospho-N-acetylmuramoyl-pentapeptide-transferase from Paraburkholderia xenovorans (strain LB400).